A 104-amino-acid chain; its full sequence is Large ribosomal subunit protein bL21 (104 aa).

Belongs to the bacterial ribosomal protein bL21 family. Part of the 50S ribosomal subunit. Contacts protein L20.

In terms of biological role, this protein binds to 23S rRNA in the presence of protein L20. The polypeptide is Large ribosomal subunit protein bL21 (Symbiobacterium thermophilum (strain DSM 24528 / JCM 14929 / IAM 14863 / T)).